Consider the following 408-residue polypeptide: Acetate kinase (408 aa).

Position 10 (Asn-10) interacts with Mg(2+). Lys-17 contacts ATP. A substrate-binding site is contributed by Arg-96. Asp-153 functions as the Proton donor/acceptor in the catalytic mechanism. ATP is bound by residues 213–217 (HLGNG) and 288–290 (DLR). Glu-393 provides a ligand contact to Mg(2+).

This sequence belongs to the acetokinase family. As to quaternary structure, homodimer. The cofactor is Mg(2+). Mn(2+) is required as a cofactor.

It localises to the cytoplasm. It catalyses the reaction acetate + ATP = acetyl phosphate + ADP. It participates in metabolic intermediate biosynthesis; acetyl-CoA biosynthesis; acetyl-CoA from acetate: step 1/2. Functionally, catalyzes the formation of acetyl phosphate from acetate and ATP. Can also catalyze the reverse reaction. The chain is Acetate kinase from Borrelia recurrentis (strain A1).